The following is an 888-amino-acid chain: MLSRLFRMHGLFVASHPWEVIVGTVTLTICMMSMNMFTGNDKICGWNYECPKFEEDVLSSDIIILTITRCIAILYIYFQFQNLRQLGSKYILGIAGLFTIFSSFVFSTVVIHFLDKELTGLNEALPFFLLLIDLSRASALAKFALSSNSQDEVRENIARGMAILGPTFTLDALVECLVIGVGTMSGVRQLEIMCCFGCMSVLANYFVFMTFFPACVSLVLELSRESREGRPIWQLSHFARVLEEEENKPNPVTQRVKMIMSLGLVLVHAHSRWIADPSPQNSTADNSKVSLGLDENVSKRIEPSVSLWQFYLSKMISMDIEQVITLSLALLLAVKYIFFEQAETESTLSLKNPITSPVVTQKKVPDSCCRREPVVVRNNQKFCSVEEEAGMSQDRKVEVIKPLVAETDSPHRAAFVVGGSSFPDTSLVLETKEPEIELPKEPRPNEECLQILGNAEKGAKFLSDAEIIQLVNAKHIPAYKLETLMETHERGVSIRRQLLSKKLPEPSSLQYLPYRDYNYSLVLGACCENVIGYMPIPVGVVGPLCLDGKEFQVPMATTEGCLVASTNRGCRAICLGGGASSRVLADGMTRGPVVRLPRACDSAEVKAWLETPEGFAVIKEAFDSTSRFARLQKLHISMAGRNLYIRFQSRTGDAMGMNMISKGTEKALSKLHEYFPEMQILAVSGNYCTDKKPAAVNWIEGRGKTVVCEAVIPAKVVREVLKTTTEAMIDVNINKNLVGSAMAGSIGGYNAHAANYVTAIYIACGQDAAQNVGSSNCITLMEASGPPNEDLYISCTMPSIEIGTVGGGTNLLPQQACLQMLGVQGACKDSPGENARQLARIVCGTVMAGELSLMAALAAGHLVKSHMIHNRSKINLQDLEGACTKKAA.

The Cytoplasmic portion of the chain corresponds to 1–9 (MLSRLFRMH). A helical transmembrane segment spans residues 10-39 (GLFVASHPWEVIVGTVTLTICMMSMNMFTG). Topologically, residues 40 to 56 (NDKICGWNYECPKFEED) are lumenal. The chain crosses the membrane as a helical span at residues 57–78 (VLSSDIIILTITRCIAILYIYF). One can recognise an SSD domain in the interval 61–218 (DIIILTITRC…MTFFPACVSL (158 aa)). The short motif at 75-78 (YIYF) is the INSIG-binding motif element. Over 79–89 (QFQNLRQLGSK) the chain is Cytoplasmic. Residue lysine 89 forms a Glycyl lysine isopeptide (Lys-Gly) (interchain with G-Cter in ubiquitin) linkage. Residues 90–114 (YILGIAGLFTIFSSFVFSTVVIHFL) traverse the membrane as a helical segment. Topologically, residues 115–123 (DKELTGLNE) are lumenal. The helical transmembrane segment at 124 to 149 (ALPFFLLLIDLSRASALAKFALSSNS) threads the bilayer. Topologically, residues 150 to 159 (QDEVRENIAR) are cytoplasmic. Residues 160–187 (GMAILGPTFTLDALVECLVIGVGTMSGV) form a helical membrane-spanning segment. Topologically, residues 188 to 191 (RQLE) are lumenal. A helical transmembrane segment spans residues 192–220 (IMCCFGCMSVLANYFVFMTFFPACVSLVL). Residues 221-248 (ELSRESREGRPIWQLSHFARVLEEEENK) lie on the Cytoplasmic side of the membrane. Lysine 248 participates in a covalent cross-link: Glycyl lysine isopeptide (Lys-Gly) (interchain with G-Cter in ubiquitin). Residues 249-275 (PNPVTQRVKMIMSLGLVLVHAHSRWIA) traverse the membrane as a helical segment. At 276 to 314 (DPSPQNSTADNSKVSLGLDENVSKRIEPSVSLWQFYLSK) the chain is on the lumenal side. 2 N-linked (GlcNAc...) asparagine glycosylation sites follow: asparagine 281 and asparagine 296. Residues 315-339 (MISMDIEQVITLSLALLLAVKYIFF) traverse the membrane as a helical segment. Over 340-888 (EQAETESTLS…LEGACTKKAA (549 aa)) the chain is Cytoplasmic. Residues glutamate 559, lysine 691, and aspartate 767 each act as charge relay system in the active site. Histidine 866 (proton donor) is an active-site residue. Position 872 is a phosphoserine; by AMPK (serine 872).

Belongs to the HMG-CoA reductase family. As to quaternary structure, homotetramer. Homodimer. Interacts (via its SSD) with INSIG1; the interaction, accelerated by sterols, leads to the recruitment of HMGCR to AMFR/gp78 for its ubiquitination by the sterol-mediated ERAD pathway. Interacts with UBIAD1. In terms of processing, undergoes sterol-mediated ubiquitination and ER-associated degradation (ERAD). Accumulation of sterols in the endoplasmic reticulum (ER) membrane, triggers binding of the reductase to the ER membrane protein INSIG1 or INSIG2. The INSIG1 binding leads to the recruitment of the ubiquitin ligase, AMFR/gp78, RNF139 or RNF145, initiating ubiquitination of the reductase. The ubiquitinated reductase is then extracted from the ER membrane and delivered to cytosolic 26S proteosomes by a mechanism probably mediated by the ATPase Valosin-containing protein VCP/p97. The INSIG2-binding leads to the recruitment of the ubiquitin ligase RNF139, initiating ubiquitination of the reductase. Lys-248 is the main site of ubiquitination. Ubiquitination is enhanced by the presence of a geranylgeranylated protein. N-glycosylated. Deglycosylated by NGLY1 on release from the endoplasmic reticulum (ER) in a sterol-mediated manner. Post-translationally, phosphorylated. Phosphorylation at Ser-872 reduces the catalytic activity.

It is found in the endoplasmic reticulum membrane. Its subcellular location is the peroxisome membrane. The enzyme catalyses (R)-mevalonate + 2 NADP(+) + CoA = (3S)-3-hydroxy-3-methylglutaryl-CoA + 2 NADPH + 2 H(+). The protein operates within metabolic intermediate biosynthesis; (R)-mevalonate biosynthesis; (R)-mevalonate from acetyl-CoA: step 3/3. Regulated by a negative feedback mechanism through sterols and non-sterol metabolites derived from mevalonate. Phosphorylation at Ser-872 down-regulates the catalytic activity. In terms of biological role, catalyzes the conversion of (3S)-hydroxy-3-methylglutaryl-CoA (HMG-CoA) to mevalonic acid, the rate-limiting step in the synthesis of cholesterol and other isoprenoids, thus plays a critical role in cellular cholesterol homeostasis. The sequence is that of 3-hydroxy-3-methylglutaryl-coenzyme A reductase (HMGCR) from Oryctolagus cuniculus (Rabbit).